Reading from the N-terminus, the 318-residue chain is Putative olfactory receptor 2W6 (318 aa).

Residues 1-31 (MGFYHVGQAAFELLTSSFILVGFSDRPHLEL) lie on the Extracellular side of the membrane. A helical membrane pass occupies residues 32–52 (IVFVVVLIFYLLTLLGNMTIV). The Cytoplasmic portion of the chain corresponds to 53 to 63 (LLSALDSRLHT). Residues 64 to 84 (PMYFFLANLSFLDMCFTTGSI) traverse the membrane as a helical segment. Residues 85 to 103 (PQMLYNLWGPDKTISYVGC) are Extracellular-facing. A disulfide bridge links cysteine 103 with cysteine 185. The chain crosses the membrane as a helical span at residues 104–124 (AIQLYFVLALGGVECVLLAVM). Over 125–145 (AYDRYAAVCKPLHYTIIMHPR) the chain is Cytoplasmic. A helical transmembrane segment spans residues 146–166 (LCGQLASVAWLSGFGNSLIMA). Topologically, residues 167 to 202 (PQTLMLPRCGHRRVDHFLCEMPALIGMACVDTMMLE) are extracellular. The helical transmembrane segment at 203–223 (ALAFALAIFIILAPLILILIS) threads the bilayer. Residues 224–245 (YGYVGGTVLRIKSAAGRKKAFN) lie on the Cytoplasmic side of the membrane. A helical transmembrane segment spans residues 246 to 266 (TCSSHLIVVSLFYGTIIYMYL). Over 267–277 (QPANTYSQDQG) the chain is Extracellular. A helical membrane pass occupies residues 278 to 298 (KFLTLFYTIVTPSVNPLIYTL). At 299–318 (RNKDVKEAMKKVLGKGSAEI) the chain is on the cytoplasmic side.

This sequence belongs to the G-protein coupled receptor 1 family.

It localises to the cell membrane. Odorant receptor. The polypeptide is Putative olfactory receptor 2W6 (OR2W6P) (Homo sapiens (Human)).